Consider the following 51-residue polypeptide: AANQRLCGSHLVDALYLVCGERGFFYSPKGGIVEQCCHNTCSLYQLENYCN.

3 disulfide bridges follow: Cys-7–Cys-37, Cys-19–Cys-50, and Cys-36–Cys-41.

The protein belongs to the insulin family. In terms of assembly, heterodimer of a B chain and an A chain linked by two disulfide bonds.

Its subcellular location is the secreted. Insulin decreases blood glucose concentration. It increases cell permeability to monosaccharides, amino acids and fatty acids. It accelerates glycolysis, the pentose phosphate cycle, and glycogen synthesis in liver. The chain is Insulin (INS) from Alligator mississippiensis (American alligator).